The following is a 123-amino-acid chain: NADH-quinone oxidoreductase subunit A (123 aa).

A run of 3 helical transmembrane segments spans residues 11–31, 68–88, and 93–113; these read YLPI…IMIL, LVAI…PWAI, and IGKI…IGFI.

It belongs to the complex I subunit 3 family. NDH-1 is composed of 14 different subunits. Subunits NuoA, H, J, K, L, M, N constitute the membrane sector of the complex.

The protein resides in the cell inner membrane. The enzyme catalyses a quinone + NADH + 5 H(+)(in) = a quinol + NAD(+) + 4 H(+)(out). In terms of biological role, NDH-1 shuttles electrons from NADH, via FMN and iron-sulfur (Fe-S) centers, to quinones in the respiratory chain. The immediate electron acceptor for the enzyme in this species is believed to be ubiquinone. Couples the redox reaction to proton translocation (for every two electrons transferred, four hydrogen ions are translocated across the cytoplasmic membrane), and thus conserves the redox energy in a proton gradient. This is NADH-quinone oxidoreductase subunit A from Rickettsia felis (strain ATCC VR-1525 / URRWXCal2) (Rickettsia azadi).